Consider the following 167-residue polypeptide: Small ribosomal subunit protein uS5 (167 aa).

The S5 DRBM domain maps to Leu12–Val75.

It belongs to the universal ribosomal protein uS5 family. As to quaternary structure, part of the 30S ribosomal subunit. Contacts proteins S4 and S8.

With S4 and S12 plays an important role in translational accuracy. Functionally, located at the back of the 30S subunit body where it stabilizes the conformation of the head with respect to the body. The polypeptide is Small ribosomal subunit protein uS5 (Shewanella baltica (strain OS223)).